A 138-amino-acid polypeptide reads, in one-letter code: Large ribosomal subunit protein bL17 (138 aa).

It belongs to the bacterial ribosomal protein bL17 family. As to quaternary structure, part of the 50S ribosomal subunit. Contacts protein L32.

This is Large ribosomal subunit protein bL17 from Buchnera aphidicola subsp. Schizaphis graminum (strain Sg).